The chain runs to 416 residues: Lactose permease (416 aa).

The Cytoplasmic portion of the chain corresponds to 1-13 (MYYLKNTNFWMFG). The helical transmembrane segment at 14–34 (FFFFFYFFIMGAYFPFFPIWL) threads the bilayer. The Periplasmic segment spans residues 35 to 45 (HEVNHISKGDT). A helical transmembrane segment spans residues 46–66 (GIIFACISLFSLLFQPIFGLL). Residues 67 to 75 (SDKLGLRKH) lie on the Cytoplasmic side of the membrane. The helical transmembrane segment at 76–96 (LLWVITGMLVMFAPFFIYVFG) threads the bilayer. A topological domain (periplasmic) is located at residue Pro97. Residues 98–118 (LLQVNILLGSIVGGIYLGFIY) form a helical membrane-spanning segment. At 119 to 144 (NAGAPAIEAYIEKASRRSNFEFGRAR) the chain is on the cytoplasmic side. Residues 145–165 (MFGCVGWALCASIAGIMFTIN) form a helical membrane-spanning segment. Position 166 (Asn166) is a topological domain, periplasmic. A helical transmembrane segment spans residues 167–187 (QFVFWLGSGCAVILALLLLFS). Residues 188–211 (KTDVPSSAKVADAVGANNSAFSLK) lie on the Cytoplasmic side of the membrane. The chain crosses the membrane as a helical span at residues 212–232 (LALELFKQPKLWLISLYVVGV). At 233-262 (SCTYDVFDQQFANFFTSFFATGEQGTRVFG) the chain is on the periplasmic side. The chain crosses the membrane as a helical span at residues 263-283 (YVTTMGELLNASIMFFAPLIV). Topologically, residues 284–290 (NRIGGKN) are cytoplasmic. A helical transmembrane segment spans residues 291–309 (ALLLAGTIMSVRIIGSHSH). The Periplasmic portion of the chain corresponds to 310–314 (TALEV). The chain crosses the membrane as a helical span at residues 315-336 (VILKTLHMFEIPFLIVGCFKYI). Over 337–347 (TSQFEVRFSAT) the chain is Cytoplasmic. A helical membrane pass occupies residues 348 to 368 (IYLVCFCFFKQLAMIFMSVLA). At 369–378 (GKMYESIGFQ) the chain is on the periplasmic side. A helical transmembrane segment spans residues 379–399 (GAYLVLGIIRVSFTLISVFTL). The Cytoplasmic segment spans residues 400 to 416 (SGPGPFSLLRRRESVAL).

This sequence belongs to the major facilitator superfamily. Oligosaccharide:H(+) symporter (OHS) (TC 2.A.1.5) family.

It localises to the cell inner membrane. The enzyme catalyses lactose(in) + H(+)(in) = lactose(out) + H(+)(out). In terms of biological role, responsible for transport of beta-galactosides into the cell, with the concomitant import of a proton (symport system). The polypeptide is Lactose permease (lacY) (Citrobacter freundii).